The chain runs to 215 residues: Chaperone protein TorD (215 aa).

It belongs to the TorD/DmsD family. TorD subfamily.

The protein localises to the cytoplasm. In terms of biological role, involved in the biogenesis of TorA. Acts on TorA before the insertion of the molybdenum cofactor and, as a result, probably favors a conformation of the apoenzyme that is competent for acquiring the cofactor. This is Chaperone protein TorD from Vibrio vulnificus (strain CMCP6).